The following is a 161-amino-acid chain: Arachidonate 5-lipoxygenase-activating protein (161 aa).

The Lumenal portion of the chain corresponds to 1–8; the sequence is MDQEAVGN. The helical transmembrane segment at 9-30 threads the bilayer; it reads IVLLAIVTLISVVQNGFFAHKV. The Cytoplasmic portion of the chain corresponds to 31–52; that stretch reads EHESKTHNGRSFQRTGTLAFER. Residues 53–77 form a helical membrane-spanning segment; the sequence is VYTANQNCVDAYPTFLVMLWSAGLL. At 78 to 80 the chain is on the lumenal side; the sequence is CSQ. Residues 81 to 102 form a helical membrane-spanning segment; it reads VPAAFAGLMYLFVRQKYFVGYL. The Cytoplasmic portion of the chain corresponds to 103–107; the sequence is GERTQ. The stretch at 108 to 115 is an intramembrane region; sequence STPGYIFG. The helical transmembrane segment at 116-128 threads the bilayer; that stretch reads KRIILFLFAMSLA. Residues 129-161 lie on the Lumenal side of the membrane; that stretch reads GILNYFFIALFGSDFENYIKTVTTTISPLLLIP.

The protein belongs to the MAPEG family. As to quaternary structure, homotrimer. Interacts with LTC4S and ALOX5.

It is found in the nucleus membrane. It localises to the endoplasmic reticulum membrane. In terms of biological role, required for leukotriene biosynthesis by ALOX5 (5-lipoxygenase). Anchors ALOX5 to the membrane. Binds arachidonic acid, and could play an essential role in the transfer of arachidonic acid to ALOX5. Binds to MK-886, a compound that blocks the biosynthesis of leukotrienes. In Bos taurus (Bovine), this protein is Arachidonate 5-lipoxygenase-activating protein (ALOX5AP).